Consider the following 872-residue polypeptide: Cellulose synthase catalytic subunit [UDP-forming] (872 aa).

Helical transmembrane passes span 30–50, 151–171, 173–193, and 230–250; these read SAFSATLGCFWMILAWIFIPL, ILGIIVTFSLILALICVTQPF, PLAQFIFLMLLWGVALIVRRM, and LVCGLILLFAETYAWIVLVLG. Positions 271 to 364 are catalytic subdomain A; the sequence is LWPSVDIFVP…FVSIFDCDHV (94 aa). Aspartate 313 is an active-site residue. 2 residues coordinate substrate: aspartate 360 and aspartate 362. A catalytic subdomain B region spans residues 441-501; sequence KPLDEIGGIA…GQRIRWARGM (61 aa). The active site involves aspartate 457. Helical transmembrane passes span 525–545, 547–567, 592–612, 640–660, and 668–688; these read VNAMFHFLSGIPRLIFLTAPL, FLLLHAYIIYAPALMIALFVL, IYETVLAWYIAPPTLVALINP, IFLVLLNLVGVAVGIWRYFYG, and VVVSMVWVFYNLIVLGGAVAV. The PilZ domain occupies 694 to 790; that stretch reads QVRRSHRVEM…QHIDFVQCTF (97 aa). Residues 833 to 853 traverse the membrane as a helical segment; that stretch reads SVKGIFRVLTSLVSWVVSFIP.

This sequence belongs to the glycosyltransferase 2 family. It depends on Mg(2+) as a cofactor.

It is found in the cell inner membrane. It catalyses the reaction [(1-&gt;4)-beta-D-glucosyl](n) + UDP-alpha-D-glucose = [(1-&gt;4)-beta-D-glucosyl](n+1) + UDP + H(+). It participates in glycan metabolism; bacterial cellulose biosynthesis. With respect to regulation, activated by bis-(3'-5') cyclic diguanylic acid (c-di-GMP). Functionally, catalytic subunit of cellulose synthase. It polymerizes uridine 5'-diphosphate glucose to cellulose, which is produced as an extracellular component for mechanical and chemical protection at the onset of the stationary phase, when the cells exhibit multicellular behavior (rdar morphotype). Coexpression of cellulose and thin aggregative fimbriae (curli fimbrae or fibers) leads to a hydrophobic network with tightly packed cells embedded in a highly inert matrix that confers cohesion, elasticity and tissue-like properties to colonies. The polypeptide is Cellulose synthase catalytic subunit [UDP-forming] (bcsA) (Escherichia coli (strain K12)).